Reading from the N-terminus, the 129-residue chain is MSNIPTDLRYAATHEWVRPEGDGVFTVGISEHAQGLLGDMVFVELPDVGDAVSTGDDICVAESVKAASDVYAPISGEVVEVNEDLEDSPELVNSDPYGDGWLFKIKADDAAEVEGLLDAEGYENSIDEE.

One can recognise a Lipoyl-binding domain in the interval 24 to 106 (VFTVGISEHA…YGDGWLFKIK (83 aa)). At Lys-65 the chain carries N6-lipoyllysine.

It belongs to the GcvH family. In terms of assembly, the glycine cleavage system is composed of four proteins: P, T, L and H. It depends on (R)-lipoate as a cofactor.

In terms of biological role, the glycine cleavage system catalyzes the degradation of glycine. The H protein shuttles the methylamine group of glycine from the P protein to the T protein. The sequence is that of Glycine cleavage system H protein from Alteromonas mediterranea (strain DSM 17117 / CIP 110805 / LMG 28347 / Deep ecotype).